Here is a 393-residue protein sequence, read N- to C-terminus: Putative N(4)-(beta-N-acetylglucosaminyl)-L-asparaginase GM21137 (393 aa).

The signal sequence occupies residues 1–23 (MRTHLRASLWVLCLASTAFSILA). 2 cysteine pairs are disulfide-bonded: Cys97–Cys102 and Cys196–Cys212. The active-site Nucleophile is Thr243. Substrate-binding positions include 271-274 (RVGD) and 294-297 (TGDG). A disulfide bond links Cys354 and Cys381.

The protein belongs to the Ntn-hydrolase family. Heterotetramer of two alpha and two beta chains arranged as a dimer of alpha/beta heterodimers. In terms of processing, cleaved into an alpha and beta chain by autocatalysis; this activates the enzyme. The N-terminal residue of the beta subunit is responsible for the nucleophile hydrolase activity.

It carries out the reaction N(4)-(beta-N-acetyl-D-glucosaminyl)-L-asparagine + H2O = N-acetyl-beta-D-glucosaminylamine + L-aspartate + H(+). Functionally, cleaves the GlcNAc-Asn bond which joins oligosaccharides to the peptide of asparagine-linked glycoproteins. The sequence is that of Putative N(4)-(beta-N-acetylglucosaminyl)-L-asparaginase GM21137 from Drosophila sechellia (Fruit fly).